We begin with the raw amino-acid sequence, 572 residues long: Vacuolar protein sorting-associated protein vps901 (572 aa).

2 stretches are compositionally biased toward basic and acidic residues: residues 1-31 and 39-53; these read MDYP…EKPL and DEQR…KNHD. The segment at 1–108 is disordered; the sequence is MDYPSFHEDP…HENNPGQQEI (108 aa). A compositionally biased stretch (polar residues) spans 69-80; it reads QYEQTDSSSDQE. Over residues 82-98 the composition is skewed to basic and acidic residues; the sequence is MNEKQSLDKENRNDNIP. A VPS9 domain is found at 219 to 357; the sequence is VEEDRVLSEK…IETLDCSSLT (139 aa). Residues 430–502 form a disordered region; it reads QIDTPESKEY…IVHEEQPVDD (73 aa). Positions 445 to 457 are enriched in polar residues; that stretch reads PRGSSHSGSFTTD. The 43-residue stretch at 529-571 folds into the CUE domain; the sequence is REKAEAITALRAMFPAFDSEVIEVVLNAQQGRLSSSIDSLLEM.

Functionally, required for vacuolar protein sorting; may be required for the consumption of transport vesicles containing vacuolar protein precursors. Required for vacuolar fusion. This is Vacuolar protein sorting-associated protein vps901 (vps901) from Schizosaccharomyces pombe (strain 972 / ATCC 24843) (Fission yeast).